The chain runs to 67 residues: Large ribosomal subunit protein bL35 (67 aa).

Belongs to the bacterial ribosomal protein bL35 family.

The protein is Large ribosomal subunit protein bL35 of Rickettsia prowazekii (strain Madrid E).